Here is a 453-residue protein sequence, read N- to C-terminus: Glutamyl-tRNA(Gln) amidotransferase subunit A (453 aa).

Active-site charge relay system residues include lysine 56 and serine 131. Serine 155 (acyl-ester intermediate) is an active-site residue.

Belongs to the amidase family. GatA subfamily. As to quaternary structure, heterotrimer of A, B and C subunits.

It catalyses the reaction L-glutamyl-tRNA(Gln) + L-glutamine + ATP + H2O = L-glutaminyl-tRNA(Gln) + L-glutamate + ADP + phosphate + H(+). Allows the formation of correctly charged Gln-tRNA(Gln) through the transamidation of misacylated Glu-tRNA(Gln) in organisms which lack glutaminyl-tRNA synthetase. The reaction takes place in the presence of glutamine and ATP through an activated gamma-phospho-Glu-tRNA(Gln). The polypeptide is Glutamyl-tRNA(Gln) amidotransferase subunit A (Campylobacter jejuni subsp. jejuni serotype O:6 (strain 81116 / NCTC 11828)).